A 192-amino-acid chain; its full sequence is Putative cyclic ADP-D-ribose synthase ThsB1 (192 aa).

Belongs to the Thoeris B TIR-like family. Monomer; not seen to interact with ThsA.

It localises to the cytoplasm. With respect to regulation, activated upon phage infection. Its function is as follows. TIR-like domain-containing component of the Thoeris antiviral defense system, composed of ThsA and ThsB. Expression of ThsA and ThsB in B.subtilis (strain BEST7003) confers resistance to phages SBSphiC, SBSphiJ and SPO1. Phage infection activates this protein so that 30 to 45 minutes post-infection with phage SPO1 it generates a signal molecule that in turn activates the NAD(+) hydrolase activity of ThsA. The signal is similar to cyclic ADP-D-ribose, but how it differs is unknown. In vitro purified (but unactivated) ThsB has no NAD(+) hydrolyzing activity, no activity on AMP, CMP, GMP or UMP, does not alter the activity of ThsA, does not bind DNA. Hydrolyzes NAD(+) to make a cyclic ADP-D-ribose (cADPR) signaling molecule; might make 3'cADPR. This Bacillus cereus (strain MSX-D12) protein is Putative cyclic ADP-D-ribose synthase ThsB1.